Reading from the N-terminus, the 69-residue chain is Putative membrane protein insertion efficiency factor (69 aa).

The protein belongs to the UPF0161 family.

The protein resides in the cell membrane. Functionally, could be involved in insertion of integral membrane proteins into the membrane. The sequence is that of Putative membrane protein insertion efficiency factor from Clostridium beijerinckii (strain ATCC 51743 / NCIMB 8052) (Clostridium acetobutylicum).